The sequence spans 357 residues: 4-hydroxyphenylpyruvate dioxygenase (357 aa).

VOC domains lie at glycine 17–arginine 137 and tyrosine 165–aspartate 316. The Fe cation site is built by histidine 168, histidine 246, and glutamate 325.

The protein belongs to the 4HPPD family. As to quaternary structure, homotetramer. The cofactor is Fe cation.

It carries out the reaction 3-(4-hydroxyphenyl)pyruvate + O2 = homogentisate + CO2. It participates in amino-acid degradation; L-phenylalanine degradation; acetoacetate and fumarate from L-phenylalanine: step 3/6. The sequence is that of 4-hydroxyphenylpyruvate dioxygenase (hpd) from Pseudomonas aeruginosa (strain ATCC 15692 / DSM 22644 / CIP 104116 / JCM 14847 / LMG 12228 / 1C / PRS 101 / PAO1).